Consider the following 350-residue polypeptide: Hydroxymethylglutaryl-CoA synthase (350 aa).

The active-site Proton donor/acceptor is Glu-83. The active-site Acyl-thioester intermediate is the Cys-115. Positions 115 and 156 each coordinate (3S)-3-hydroxy-3-methylglutaryl-CoA. Residue Arg-204 participates in CoA binding. Residues Thr-206 and His-239 each coordinate (3S)-3-hydroxy-3-methylglutaryl-CoA. The Proton donor/acceptor role is filled by His-239. Position 244 (Lys-244) interacts with CoA. Residues Asn-271 and Ser-301 each coordinate (3S)-3-hydroxy-3-methylglutaryl-CoA.

It belongs to the thiolase-like superfamily. Archaeal HMG-CoA synthase family. In terms of assembly, interacts with acetoacetyl-CoA thiolase that catalyzes the precedent step in the pathway and with a DUF35 protein. The acetoacetyl-CoA thiolase/HMG-CoA synthase complex channels the intermediate via a fused CoA-binding site, which allows for efficient coupling of the endergonic thiolase reaction with the exergonic HMGCS reaction.

It carries out the reaction acetoacetyl-CoA + acetyl-CoA + H2O = (3S)-3-hydroxy-3-methylglutaryl-CoA + CoA + H(+). It participates in metabolic intermediate biosynthesis; (R)-mevalonate biosynthesis; (R)-mevalonate from acetyl-CoA: step 2/3. Functionally, catalyzes the condensation of acetyl-CoA with acetoacetyl-CoA to form 3-hydroxy-3-methylglutaryl-CoA (HMG-CoA). Functions in the mevalonate (MVA) pathway leading to isopentenyl diphosphate (IPP), a key precursor for the biosynthesis of isoprenoid compounds that are building blocks of archaeal membrane lipids. The polypeptide is Hydroxymethylglutaryl-CoA synthase (Thermococcus onnurineus (strain NA1)).